The sequence spans 161 residues: Endoribonuclease YbeY (161 aa).

Zn(2+) is bound by residues His-120, His-124, and His-130.

It belongs to the endoribonuclease YbeY family. Zn(2+) is required as a cofactor.

Its subcellular location is the cytoplasm. Functionally, single strand-specific metallo-endoribonuclease involved in late-stage 70S ribosome quality control and in maturation of the 3' terminus of the 16S rRNA. This Erythrobacter litoralis (strain HTCC2594) protein is Endoribonuclease YbeY.